A 281-amino-acid chain; its full sequence is DegV domain-containing protein YqaC (281 aa).

The 277-residue stretch at 3–279 (LAVITDSSAD…LNTVAYGISP (277 aa)) folds into the DegV domain. Residues Thr-60 and Ser-93 each contribute to the hexadecanoate site.

Functionally, may bind long-chain fatty acids, such as palmitate, and may play a role in lipid transport or fatty acid metabolism. The chain is DegV domain-containing protein YqaC (yqaC) from Lactococcus lactis subsp. lactis (strain IL1403) (Streptococcus lactis).